We begin with the raw amino-acid sequence, 803 residues long: Pre-mRNA-splicing ATP-dependent RNA helicase prp28 (803 aa).

2 disordered regions span residues 1–83 and 115–210; these read MDDI…PLSV and KRAK…PVDD. A compositionally biased stretch (pro residues) spans 11-62; that stretch reads EVPPPQPPPEPVERPPTPPPPPPEESVAPPPPPEVVAPPPPPEDLPPAPPPP. The segment covering 115-126 has biased composition (basic and acidic residues); it reads KRAKEVEAERRL. Residues 135–146 show a composition bias toward polar residues; that stretch reads SATQSPSVSSEV. The Q motif signature appears at 367-395; the sequence is RSWDESGLPKRLMELVNKVGYKEPTPIQR. The 206-residue stretch at 398–603 folds into the Helicase ATP-binding domain; sequence IPIAMQSRDL…RKYLRRPAIV (206 aa). 411 to 418 provides a ligand contact to ATP; that stretch reads AVTGSGKT. Positions 526 to 529 match the DEAD box motif; it reads DEAD. Residues 614-777 form the Helicase C-terminal domain; sequence TVEQRVEFIA…RLPEELRKHE (164 aa). A disordered region spans residues 773–803; it reads LRKHEAAQSKPTRGFAKKNDDNSAFGSKGGW.

It belongs to the DEAD box helicase family. DDX23/PRP28 subfamily. In terms of assembly, component of the U5 snRNP complex.

It localises to the cytoplasm. The protein localises to the nucleus. The enzyme catalyses ATP + H2O = ADP + phosphate + H(+). ATP-dependent RNA helicase involved in mRNA splicing. May destabilize the U1/5'-splice site duplex to permit an effective competition for the 5'-splice site by the U6 snRNA, resulting in the switch between U1 and U6 at the 5'-splice site. May also act to unwind the U4/U6 base-pairing interaction in the U4/U6/U5 snRNP, facilitating the first covalent step of splicing. This chain is Pre-mRNA-splicing ATP-dependent RNA helicase prp28 (prp28), found in Aspergillus oryzae (strain ATCC 42149 / RIB 40) (Yellow koji mold).